The chain runs to 408 residues: BRCA1-A complex subunit Abraxas 1 (408 aa).

Positions 7-155 (TAVMSGFVFG…KSTHRLEYAL (149 aa)) constitute an MPN domain. Positions 210-273 (ALAEVNRISN…EETGNKVSEA (64 aa)) form a coiled coil. Residues 360-372 (LQLQKQHSQNGDS) are compositionally biased toward polar residues. Positions 360–408 (LQLQKQHSQNGDSEGSDSERPLCNSGTETDGDILESLHMDVSRSKSPIF) are disordered. Serine 405 bears the Phosphoserine mark. Residues 405–408 (SPIF) carry the pSXXF motif motif.

It belongs to the FAM175 family. Abraxas subfamily. Component of the BRCA1-A complex. Component of the BRISC complex. Interacts directly (when phosphorylated at Ser-405) with brca1. Homodimer. The phosphorylated homodimer can interact directly with two brca1 chains, giving rise to a heterotetramer. Phosphorylation of Ser-405 of the pSXXF motif by ATM or ATR constitutes a specific recognition motif for the BRCT domain of BRCA1.

It is found in the nucleus. Its function is as follows. Involved in DNA damage response and double-strand break (DSB) repair. Component of the BRCA1-A complex, acting as a central scaffold protein that assembles the various components of the complex and mediates the recruitment of brca1. The BRCA1-A complex specifically recognizes 'Lys-63'-linked ubiquitinated histones H2A and H2AX at DNA lesion sites, leading to target the brca1-bard1 heterodimer to sites of DNA damage at DSBs. This complex also possesses deubiquitinase activity that specifically removes 'Lys-63'-linked ubiquitin on histones H2A and H2AX. This Xenopus tropicalis (Western clawed frog) protein is BRCA1-A complex subunit Abraxas 1.